The chain runs to 186 residues: MSVADTKKSAEQKMQKSIEAFKADLAKIRTGRAHTGLLDHVQVDYYGSMVPISQVAAIGLADARTITVQPWEKKMVSAVEKAIRDCDLGLNPATMGEVIRVPMPALTEERRKELTKVVKGEAEGAKVAVRNLRRDANEQFKKLVKDKTISEDEERRGQDEVQKLTDKYVAEIDRMVAEKEKEIMTV.

It belongs to the RRF family.

Its subcellular location is the cytoplasm. Functionally, responsible for the release of ribosomes from messenger RNA at the termination of protein biosynthesis. May increase the efficiency of translation by recycling ribosomes from one round of translation to another. This is Ribosome-recycling factor from Cupriavidus taiwanensis (strain DSM 17343 / BCRC 17206 / CCUG 44338 / CIP 107171 / LMG 19424 / R1) (Ralstonia taiwanensis (strain LMG 19424)).